Consider the following 410-residue polypeptide: NADH-quinone oxidoreductase subunit H (410 aa).

9 helical membrane passes run 11-31 (LVAA…LVAI), 79-99 (FVYF…FAFI), 119-139 (LPVA…GIVL), 160-180 (VISY…MAGT), 192-212 (GVWY…SMVG), 257-277 (ALAA…NMWA), 283-303 (WWPL…YFWL), 317-337 (ALGW…AAII), and 347-367 (YWTP…VLLL). Positions 376-410 (ARASARQRGDEGTSPEPAFPTPPLLAGATKENAGG) are disordered.

Belongs to the complex I subunit 1 family. NDH-1 is composed of 14 different subunits. Subunits NuoA, H, J, K, L, M, N constitute the membrane sector of the complex.

It localises to the cell membrane. It catalyses the reaction a quinone + NADH + 5 H(+)(in) = a quinol + NAD(+) + 4 H(+)(out). In terms of biological role, NDH-1 shuttles electrons from NADH, via FMN and iron-sulfur (Fe-S) centers, to quinones in the respiratory chain. The immediate electron acceptor for the enzyme in this species is believed to be menaquinone. Couples the redox reaction to proton translocation (for every two electrons transferred, four hydrogen ions are translocated across the cytoplasmic membrane), and thus conserves the redox energy in a proton gradient. This chain is NADH-quinone oxidoreductase subunit H, found in Mycobacterium bovis (strain ATCC BAA-935 / AF2122/97).